Consider the following 275-residue polypeptide: Adenosylcobinamide-GDP ribazoletransferase (275 aa).

A run of 6 helical transmembrane segments spans residues 53-73 (WFVF…TISL), 113-133 (VGSF…LGVS), 144-164 (LPFT…LYFV), 204-224 (FACI…PYFL), 225-245 (LSLL…KRWI), and 253-273 (LGAV…FVWI).

It belongs to the CobS family. Requires Mg(2+) as cofactor.

Its subcellular location is the cell inner membrane. The enzyme catalyses alpha-ribazole + adenosylcob(III)inamide-GDP = adenosylcob(III)alamin + GMP + H(+). It carries out the reaction alpha-ribazole 5'-phosphate + adenosylcob(III)inamide-GDP = adenosylcob(III)alamin 5'-phosphate + GMP + H(+). The protein operates within cofactor biosynthesis; adenosylcobalamin biosynthesis; adenosylcobalamin from cob(II)yrinate a,c-diamide: step 7/7. Its function is as follows. Joins adenosylcobinamide-GDP and alpha-ribazole to generate adenosylcobalamin (Ado-cobalamin). Also synthesizes adenosylcobalamin 5'-phosphate from adenosylcobinamide-GDP and alpha-ribazole 5'-phosphate. The sequence is that of Adenosylcobinamide-GDP ribazoletransferase from Leptospira biflexa serovar Patoc (strain Patoc 1 / Ames).